Consider the following 225-residue polypeptide: Red fluorescent protein drFP583 (225 aa).

A cross-link (2-iminomethyl-5-imidazolinone (Gln-Gly)) is located at residues Gln66–Gly68. Tyr67 is modified ((Z)-2,3-didehydrotyrosine).

This sequence belongs to the GFP family. As to quaternary structure, homotetramer. In terms of processing, contains a chromophore consisting of modified amino acid residues. The chromophore is formed by autocatalytic backbone condensation between Xaa-N and Gly-(N+2), oxidation of Tyr-(N+1) to didehydrotyrosine, and formation of a double bond to the alpha-amino nitrogen of residue Xaa-N. Maturation of the chromophore requires nothing other than molecular oxygen.

Thought to play a role in photoprotection of the coral's resident symbiont microalgae's photosystems from photoinhibition caused by high light levels found near the surface of coral reefs. In deeper water, the fluorescence may be to convert blue light into longer wavelengths more suitable for use in photosynthesis by the microalgal symbionts. The sequence is that of Red fluorescent protein drFP583 from Discosoma sp. (Sea anemone).